A 214-amino-acid chain; its full sequence is ATP phosphoribosyltransferase (214 aa).

Belongs to the ATP phosphoribosyltransferase family. Short subfamily. In terms of assembly, heteromultimer composed of HisG and HisZ subunits.

The protein localises to the cytoplasm. It catalyses the reaction 1-(5-phospho-beta-D-ribosyl)-ATP + diphosphate = 5-phospho-alpha-D-ribose 1-diphosphate + ATP. It participates in amino-acid biosynthesis; L-histidine biosynthesis; L-histidine from 5-phospho-alpha-D-ribose 1-diphosphate: step 1/9. Its function is as follows. Catalyzes the condensation of ATP and 5-phosphoribose 1-diphosphate to form N'-(5'-phosphoribosyl)-ATP (PR-ATP). Has a crucial role in the pathway because the rate of histidine biosynthesis seems to be controlled primarily by regulation of HisG enzymatic activity. This is ATP phosphoribosyltransferase from Streptococcus sanguinis (strain SK36).